Reading from the N-terminus, the 91-residue chain is Ice-structuring protein (91 aa).

Positions 1-21 (MALSLFTVGQLIFLFWTMRIT) are cleaved as a signal peptide. Positions 22-39 (EANPDPAAKAVPAAAAPD) are cleaved as a propeptide — removed by a dipeptidylpeptidase.

This sequence belongs to the type-I AFP family.

The protein resides in the secreted. Functionally, contributes to protect fish blood from freezing at subzero sea water temperatures. Lowers the blood freezing point. Binds to nascent ice crystals and prevents further growth. The protein is Ice-structuring protein of Pseudopleuronectes americanus (Winter flounder).